The primary structure comprises 260 residues: MELQLTGKESGWWIVSHENKLWLPKGELPQGNAANWSLQGTTARQIGEWQGQSVWLIRQMMPSGMGSVRQLLDVDRGLFQLAGRGVQLAEFYRSHRFCGYCGHEMHASRTEWASLCNHCRERYYPQIAPCVIVAIRRGDEILLAQHVRHRGGINTVLAGFVEVGETLEQAVSREVLEESNIHIKNLRYVTSQPWPFPHSLMMAFMADYDSGELCHDPKELLNAGWYRYDQLPLLPPPGTVARRLIEDTVVLCREHSDLSQ.

K25 and R69 together coordinate substrate. Positions 98 and 101 each coordinate Zn(2+). E111 is a binding site for substrate. Positions 116 and 119 each coordinate Zn(2+). Residue Y124 participates in substrate binding. The region spanning 125–248 is the Nudix hydrolase domain; sequence PQIAPCVIVA…TVARRLIEDT (124 aa). 3 residues coordinate a divalent metal cation: A158, E174, and E178. Positions 159–180 match the Nudix box motif; it reads GFVEVGETLEQAVSREVLEESN. 192–199 provides a ligand contact to substrate; it reads QPWPFPHS. E219 provides a ligand contact to a divalent metal cation. A241 provides a ligand contact to substrate.

Belongs to the Nudix hydrolase family. NudC subfamily. Homodimer. The cofactor is Mg(2+). Mn(2+) is required as a cofactor. It depends on Zn(2+) as a cofactor.

The catalysed reaction is a 5'-end NAD(+)-phospho-ribonucleoside in mRNA + H2O = a 5'-end phospho-adenosine-phospho-ribonucleoside in mRNA + beta-nicotinamide D-ribonucleotide + 2 H(+). The enzyme catalyses NAD(+) + H2O = beta-nicotinamide D-ribonucleotide + AMP + 2 H(+). It catalyses the reaction NADH + H2O = reduced beta-nicotinamide D-ribonucleotide + AMP + 2 H(+). Functionally, mRNA decapping enzyme that specifically removes the nicotinamide adenine dinucleotide (NAD) cap from a subset of mRNAs by hydrolyzing the diphosphate linkage to produce nicotinamide mononucleotide (NMN) and 5' monophosphate mRNA. The NAD-cap is present at the 5'-end of some mRNAs and stabilizes RNA against 5'-processing. Has preference for mRNAs with a 5'-end purine. Catalyzes the hydrolysis of a broad range of dinucleotide pyrophosphates. The protein is NAD-capped RNA hydrolase NudC of Yersinia pestis bv. Antiqua (strain Antiqua).